We begin with the raw amino-acid sequence, 37 residues long: Cytochrome b6-f complex subunit 5 (37 aa).

Residues 5–25 (LLSGVVLGLILVTLSGLFFAA) form a helical membrane-spanning segment.

This sequence belongs to the PetG family. In terms of assembly, the 4 large subunits of the cytochrome b6-f complex are cytochrome b6, subunit IV (17 kDa polypeptide, PetD), cytochrome f and the Rieske protein, while the 4 small subunits are PetG, PetL, PetM and PetN. The complex functions as a dimer.

It is found in the cellular thylakoid membrane. Functionally, component of the cytochrome b6-f complex, which mediates electron transfer between photosystem II (PSII) and photosystem I (PSI), cyclic electron flow around PSI, and state transitions. PetG is required for either the stability or assembly of the cytochrome b6-f complex. This is Cytochrome b6-f complex subunit 5 from Trichodesmium erythraeum (strain IMS101).